We begin with the raw amino-acid sequence, 213 residues long: Protein nullo (213 aa).

As to expression, blastoderm. Throughout the entire cortex of the embryo although the distribution is not uniform.

Functionally, actin-myosin network stability during cellularization. Might be involved in increasing actin-actin interactions or membrane-to-cytoskeleton attachments. nullo together with Sry-a and bnk may provide auxiliary functions, by acting both to stabilize a large and dynamic microfilament structure and regulate its functions. The polypeptide is Protein nullo (nullo) (Drosophila melanogaster (Fruit fly)).